We begin with the raw amino-acid sequence, 106 residues long: UPF0145 protein PputGB1_2909 (106 aa).

It belongs to the UPF0145 family.

This is UPF0145 protein PputGB1_2909 from Pseudomonas putida (strain GB-1).